The following is a 471-amino-acid chain: MTDLPASVRWQLWIVAFGFFMQSLDTTIVNTALPSMAKSLGESPLHMHMIIVSYVLTVAVMLPASGWLADRVGVRNIFFTAIVLFTAGSLFCAQASTLDQLVMARVLQGVGGAMMVPVGRLTVMKIVPRDQYMAAMTFVTLPGQVGPLLGPALGGVLVEYASWHWIFLINIPVGIVGAIATLCLMPNYTMQTRRFDLSGFLLLAAGMATLTLALDGQKGLGISPAWLAGLVAVGLCALLLYLWHARGNARALFSLNLFRNRTFSLGLGGSFAGRIGSGMLPFMTPVFLQIGLGFSPFHAGLMMIPMVLGSMGMKRIVVQVVNRFGYRRVLVASTLGLAAVSLLFMFSALAGWYYVLPLVLFLQGMINASRFSSMNTLTLKDLPDDLASSGNSLLSMVMQLSMSIGVTIAGLLLGLYGQQHMSLDAASTHQVFLYTYLSMAAIIALPALIFSRVPDDVGSNTVLRRRNRSGS.

13 helical membrane passes run 12-32, 49-69, 77-97, 102-124, 138-158, 165-185, 195-215, 220-240, 263-283, 286-306, 329-351, 393-413, and 431-451; these read LWIV…VNTA, MIIV…GWLA, IFFT…QAST, VMAR…LTVM, FVTL…GVLV, WIFL…LCLM, FDLS…LALD, LGIS…ALLL, FSLG…LPFM, VFLQ…MIPM, VLVA…ALAG, LLSM…GLLL, and VFLY…LIFS.

The protein belongs to the major facilitator superfamily. TCR/Tet family.

The protein localises to the cell inner membrane. The protein is Putative multidrug resistance protein MdtD of Klebsiella pneumoniae subsp. pneumoniae (strain ATCC 700721 / MGH 78578).